Here is an 842-residue protein sequence, read N- to C-terminus: Translation initiation factor IF-2 (842 aa).

Disordered stretches follow at residues 42–91 (ETKR…NLSS) and 139–253 (LQKQ…NQEP). 2 stretches are compositionally biased toward basic and acidic residues: residues 176 to 190 (IEKR…EERH) and 199 to 214 (SEIR…DERR). Positions 340-509 (PRPPVVTIMG…LLQAEMLDLK (170 aa)) constitute a tr-type G domain. A G1 region spans residues 349–356 (GHVDHGKT). 349-356 (GHVDHGKT) contributes to the GTP binding site. The tract at residues 374-378 (GITQH) is G2. The interval 395–398 (DTPG) is G3. GTP contacts are provided by residues 395-399 (DTPGH) and 449-452 (NKID). Residues 449–452 (NKID) are G4. The segment at 485-487 (SAK) is G5.

This sequence belongs to the TRAFAC class translation factor GTPase superfamily. Classic translation factor GTPase family. IF-2 subfamily.

The protein resides in the cytoplasm. One of the essential components for the initiation of protein synthesis. Protects formylmethionyl-tRNA from spontaneous hydrolysis and promotes its binding to the 30S ribosomal subunits. Also involved in the hydrolysis of GTP during the formation of the 70S ribosomal complex. This chain is Translation initiation factor IF-2, found in Bartonella tribocorum (strain CIP 105476 / IBS 506).